A 500-amino-acid chain; its full sequence is Cytochrome P450 81F1 (500 aa).

The chain crosses the membrane as a helical span at residues 1–21 (MLYFILLPLLFLVISYKFLYS). Residue Lys248 forms a Glycyl lysine isopeptide (Lys-Gly) (interchain with G-Cter in ubiquitin) linkage. Cys438 lines the heme pocket.

It belongs to the cytochrome P450 family. The cofactor is heme.

The protein localises to the membrane. It functions in the pathway secondary metabolite biosynthesis. Functionally, involved in indole glucosinolate biosynthesis. Catalyzes hydroxylation reactions of the glucosinolate indole ring. Converts indol-3-yl-methylglucosinolate (I3M) to 4-hydroxy-indol-3-yl-methylglucosinolate (4OH-I3M) and/or 1-hydroxy-indol-3-yl-methylglucosinolate (1OH-I3M) intermediates. These hydroxy intermediates are converted to 4-methoxy-indol-3-yl-methylglucosinolate (4MO-I3M) and 1-methoxy-indol-3-yl-methylglucosinolate (1MO-I3M) by indole glucosinolate methyltransferase 1 and 2 (IGMT1 and IGMT2). The polypeptide is Cytochrome P450 81F1 (Arabidopsis thaliana (Mouse-ear cress)).